The primary structure comprises 172 residues: C-phycocyanin beta chain (172 aa).

N72 is modified (N4-methylasparagine). Residues C82 and C153 each contribute to the (2R,3E)-phycocyanobilin site.

Belongs to the phycobiliprotein family. In terms of assembly, heterodimer of an alpha and a beta subunit, which further assembles into trimers and the trimers into hexamers. The basic functional unit of phycobiliproteins is a ring-shaped hexamer formed from two back-to-back trimers contacting via the alpha chain subunits. The trimers are composed of alpha/beta subunit heterodimers arranged around a three-fold axis of symmetry. The phycoerythrins also contain a gamma subunit which is located in the center of the hexamer. Contains two covalently linked bilin chromophores.

It is found in the plastid. Its subcellular location is the chloroplast thylakoid membrane. Functionally, light-harvesting photosynthetic bile pigment-protein from the phycobiliprotein complex (phycobilisome, PBS). Phycocyanin is the major phycobiliprotein in the PBS rod. The sequence is that of C-phycocyanin beta chain (cpcB) from Aglaothamnion neglectum (Red alga).